Reading from the N-terminus, the 624-residue chain is Alpha-mannosidase I MNS4 (624 aa).

Topologically, residues 1 to 7 (MDSNFKW) are cytoplasmic. Residues 8-28 (LLFAILISLTFSGFVLHHGVL) traverse the membrane as a helical; Signal-anchor for type II membrane protein segment. Residues 29–624 (AESVKPDEAK…ETDDQRSYSS (596 aa)) are Lumenal-facing. The N-linked (GlcNAc...) asparagine glycan is linked to Asn115. Glu122 functions as the Proton donor in the catalytic mechanism. The active site involves Asp262. The Proton donor role is filled by Glu355. The active site involves Glu376. Thr466 serves as a coordination point for Ca(2+). Asn494 is a glycosylation site (N-linked (GlcNAc...) asparagine). The disordered stretch occupies residues 574–624 (QTVEKRPQEEEGFTSQSEPIMTISGGSSNDQTGQELTLLESETDDQRSYSS). Polar residues predominate over residues 586–608 (FTSQSEPIMTISGGSSNDQTGQE).

Belongs to the glycosyl hydrolase 47 family. The cofactor is Ca(2+).

It is found in the endoplasmic reticulum membrane. Its pathway is protein modification; protein glycosylation. Functionally, can convert Man(9)GlcNAc(2) and Man(8)GlcNAc(2) into N-glycans with a terminal alpha-1,6-linked Man residue in the C-branch. Functions in the formation of unique N-glycan structures that are specifically recognized by components of the endoplasmic reticulum-associated degradation (ERAD) machinery, which leads to the degradation of misfolded glycoproteins. Most likely generates N-glycan signal on misfolded glycoproteins that is subsequently recognized by OS9. Required for ERAD of the heavily glycosylated and misfolded BRI1 variants BRI1-5 and BRI1-9. Does not seem to play role in N-glycan processing of correctly folded proteins destined for secretion. This Arabidopsis thaliana (Mouse-ear cress) protein is Alpha-mannosidase I MNS4 (MNS4).